The chain runs to 415 residues: Histidine--tRNA ligase (415 aa).

The protein belongs to the class-II aminoacyl-tRNA synthetase family. In terms of assembly, homodimer.

The protein localises to the cytoplasm. The enzyme catalyses tRNA(His) + L-histidine + ATP = L-histidyl-tRNA(His) + AMP + diphosphate + H(+). This chain is Histidine--tRNA ligase, found in Rickettsia bellii (strain RML369-C).